Here is a 533-residue protein sequence, read N- to C-terminus: Putative phosphate permease HP_1491 (533 aa).

Helical transmembrane passes span 23–43, 47–67, 81–101, 129–149, 156–176, 182–202, 221–241, 248–268, 286–306, 338–358, 372–392, and 509–529; these read IALALLFLIGAALLALIFGQA, GLLLIFAAVIGGYMAMNIGAN, AISMGGAILIAAICEMLGAII, VMLASLLSGALWLHVATLIGA, SVVGGIMGAGMAAAGMVAVNW, IVASWVISPLMGALIAMFFLM, VVPYLVALMSLTFSWYLIVKV, LNFEIQLACGCILALLIFILF, INELFNVPLIFAAALLSFAHG, VPLWIMVVGAAGIALGLSLYG, LDKMQAFCIALSAVITVLLAS, and LVTVPVSALLGALLFVALGFI.

The protein belongs to the inorganic phosphate transporter (PiT) (TC 2.A.20) family.

Its subcellular location is the cell membrane. Potential transporter for phosphate. The chain is Putative phosphate permease HP_1491 from Helicobacter pylori (strain ATCC 700392 / 26695) (Campylobacter pylori).